Reading from the N-terminus, the 581-residue chain is Sulfate adenylyltransferase (581 aa).

The interval 1–176 (MANAPHGGVL…VQAIQAPTHF (176 aa)) is N-terminal. Residues 177–401 (DYVPLRFTPA…LRESYPPRPQ (225 aa)) are catalytic. Residue Gln-204 coordinates sulfate. ATP is bound by residues 204 to 207 (QTRN) and 298 to 301 (GRDH). Catalysis depends on residues Thr-205, Arg-206, and Asn-207. Arg-206 contacts sulfate. Ala-302 lines the sulfate pocket. Met-340 serves as a coordination point for ATP. The interval 402 to 581 (QGFTILLTGL…IMILESQNLV (180 aa)) is allosteric regulation domain; adenylyl-sulfate kinase-like. 3'-phosphoadenylyl sulfate contacts are provided by residues 441–444 (EELR), 486–487 (TA), and Arg-526.

In the N-terminal section; belongs to the sulfate adenylyltransferase family. This sequence in the C-terminal section; belongs to the APS kinase family. In terms of assembly, homohexamer. Dimer of trimers.

It localises to the cytoplasm. The catalysed reaction is sulfate + ATP + H(+) = adenosine 5'-phosphosulfate + diphosphate. It functions in the pathway sulfur metabolism; hydrogen sulfide biosynthesis; sulfite from sulfate: step 1/3. With respect to regulation, allosterically inhibited by 3'-phosphoadenosine 5'-phosphosulfate (PAPS). Functionally, catalyzes the first intracellular reaction of sulfate assimilation, forming adenosine-5'-phosphosulfate (APS) from inorganic sulfate and ATP. Plays an important role in sulfate activation as a component of the biosynthesis pathway of sulfur-containing amino acids. This is Sulfate adenylyltransferase from Cryptococcus neoformans var. neoformans serotype D (strain B-3501A) (Filobasidiella neoformans).